We begin with the raw amino-acid sequence, 155 residues long: Protein archease-like (155 aa).

Residues D26, D154, and I155 each contribute to the Ca(2+) site.

This sequence belongs to the archease family.

In terms of biological role, component of the tRNA-splicing ligase complex required to facilitate the enzymatic turnover of catalytic subunit RtcB (F16A11.2). The chain is Protein archease-like from Caenorhabditis elegans.